A 302-amino-acid polypeptide reads, in one-letter code: Dihydroorotate dehydrogenase B (NAD(+)), catalytic subunit (302 aa).

FMN-binding positions include S20 and 44–45 (KG). Substrate-binding positions include K44 and 68-72 (NSVGL). N98 and N125 together coordinate FMN. Substrate is bound at residue N125. C128 serves as the catalytic Nucleophile. 2 residues coordinate FMN: K163 and I189. Substrate is bound at residue 190-191 (NT). FMN-binding positions include G215, 241 to 242 (GG), and 263 to 264 (GT).

The protein belongs to the dihydroorotate dehydrogenase family. Type 1 subfamily. As to quaternary structure, heterotetramer of 2 PyrK and 2 PyrD type B subunits. It depends on FMN as a cofactor.

The protein localises to the cytoplasm. The catalysed reaction is (S)-dihydroorotate + NAD(+) = orotate + NADH + H(+). It functions in the pathway pyrimidine metabolism; UMP biosynthesis via de novo pathway; orotate from (S)-dihydroorotate (NAD(+) route): step 1/1. Catalyzes the conversion of dihydroorotate to orotate with NAD(+) as electron acceptor. This is Dihydroorotate dehydrogenase B (NAD(+)), catalytic subunit (pyrD) from Thermoanaerobacter pseudethanolicus (strain ATCC 33223 / 39E) (Clostridium thermohydrosulfuricum).